The sequence spans 291 residues: HTH-type transcriptional activator AmpR (291 aa).

One can recognise an HTH lysR-type domain in the interval 6 to 63; it reads IPLNSLRAFEAAARHLSFTRAAIELNVTHSAISQHVKSLEQQLNCQLFVRGSRGLMLT. A DNA-binding region (H-T-H motif) is located at residues 23–42; it reads FTRAAIELNVTHSAISQHVK.

Belongs to the LysR transcriptional regulatory family.

The protein localises to the cytoplasm. Regulates the expression of the beta-lactamase gene. Represses cephalosporinase (AmpC) in the presence of beta-lactams and induces it in the absence of them. This Citrobacter freundii protein is HTH-type transcriptional activator AmpR (ampR).